We begin with the raw amino-acid sequence, 256 residues long: UPF0259 membrane protein plu2479 (256 aa).

The next 5 membrane-spanning stretches (helical) occupy residues 23–43, 89–109, 132–152, 192–212, and 221–241; these read TLTL…LFIP, IFSS…LVAA, LFLL…LMLV, LLVP…FIID, and MAGI…LIYL.

It belongs to the UPF0259 family.

It localises to the cell inner membrane. The protein is UPF0259 membrane protein plu2479 of Photorhabdus laumondii subsp. laumondii (strain DSM 15139 / CIP 105565 / TT01) (Photorhabdus luminescens subsp. laumondii).